Reading from the N-terminus, the 237-residue chain is Flagellar L-ring protein (237 aa).

An N-terminal signal peptide occupies residues 1–16 (MIKRSAVVLMAVILTG). A lipid anchor (N-palmitoyl cysteine) is attached at Cys17. Residue Cys17 is the site of S-diacylglycerol cysteine attachment. The segment at 122-143 (PPDSSGDMSTDSNSSSDGKGSV) is disordered. Residues 124 to 140 (DSSGDMSTDSNSSSDGK) are compositionally biased toward low complexity.

The protein belongs to the FlgH family. In terms of assembly, the basal body constitutes a major portion of the flagellar organelle and consists of four rings (L,P,S, and M) mounted on a central rod.

The protein localises to the cell outer membrane. It localises to the bacterial flagellum basal body. Functionally, assembles around the rod to form the L-ring and probably protects the motor/basal body from shearing forces during rotation. This is Flagellar L-ring protein from Allorhizobium ampelinum (strain ATCC BAA-846 / DSM 112012 / S4) (Agrobacterium vitis (strain S4)).